The chain runs to 123 residues: Probable cyclase otaY (123 aa).

This sequence belongs to the aurE cyclase family.

It functions in the pathway mycotoxin biosynthesis. Probable cyclase; part of the gene cluster that mediates the biosynthesis of ochratoxin A (OTA), a mycotoxin composed of a chlorinated type I polyketide dihydroisocoumarin moiety linked to L-phenylalanine, and demonstrated to have nephrotoxic, immunotoxic, genotoxic, neurotoxic, and teratogenic properties. OtaY is probably involved in the polyketide cyclization. The pathway begins with the highly reducing polyketide synthase otaA that catalyzes the formation of the isocoumarin group during the initial stages of biosynthesis, starting from one acetate and 4 malonate units, to originate the characteristic pentaketide skeleton 7-methylmellein (7-MM) of the OTA molecule. The newly identified cyclase otaY might be involved in the polyketide cyclization reaction during the initial steps of the OTA biosynthesis. 7-MM is then oxidized into 7-carboxymellein (also called ochratoxin beta) by the cytochrome P450 monooxygenase otaC. The NRPS encoded by the otaB gene is involved in the linking of phenylalanine to the dihydroisocoumarin ring. The reaction catalyzed by NRPS results in the production of ochratoxin B (OTB), which is the non-chlorinated analog of OTA and which subsequently serves as the substrate of the halogenase otaD for chlorination activity to form the final molecular structure of OTA, containing a chlorine atom in the C-5 position of the molecule. The sequence is that of Probable cyclase otaY from Aspergillus carbonarius (strain ITEM 5010).